Reading from the N-terminus, the 220-residue chain is Heptaprenyl diphosphate synthase component 1 (220 aa).

As to quaternary structure, heterodimer of component I and II.

The enzyme catalyses 4 isopentenyl diphosphate + (2E,6E)-farnesyl diphosphate = all-trans-heptaprenyl diphosphate + 4 diphosphate. In terms of biological role, supplies heptaprenyl diphosphate, the precursor for the side chain of the isoprenoid quinone menaquinone-7 (MQ-7). The sequence is that of Heptaprenyl diphosphate synthase component 1 (hepS) from Geobacillus stearothermophilus (Bacillus stearothermophilus).